Reading from the N-terminus, the 356-residue chain is MKGYLKLEDGSIFEGELISKNKKGYGEVVFTTGMTGYQEAITDPSYAGQIVVMTYPLIGNYGINKYDFQSEKPHIRGFVVREYCDKPSNFQSEESLLSYLDNHNIPVLSGIDTRALTKKLRENGTMRGIITYNPEDNIEFDQTNLLEEVSTKKPYRIAGIGPKLAFIDLGTKKGILKMLNSVGFDIYVFPYNASYDDVMQINPDAIFLSNGPGDPKDAVDAIELTKHFIGMKPVLGICLGHQIIALALGCNTVKMKFGHRGANQPVKDLLTNKDYITSQNHGYAVEEESIDKDKITVTHINLNDGTVEGIMHKFLPVFSVQYHPEACPGPRDSTDIFDKFMDIVMVYKRRFYFAEV.

Residues 1 to 160 (MKGYLKLEDG…TKKPYRIAGI (160 aa)) form a CPSase region. Residues S45, G211, and G213 each contribute to the L-glutamine site. Positions 163 to 350 (KLAFIDLGTK…MDIVMVYKRR (188 aa)) constitute a Glutamine amidotransferase type-1 domain. The active-site Nucleophile is the C238. L-glutamine is bound by residues L239, Q242, N280, G282, and Y283. Residues H323 and E325 contribute to the active site.

The protein belongs to the CarA family. Composed of two chains; the small (or glutamine) chain promotes the hydrolysis of glutamine to ammonia, which is used by the large (or ammonia) chain to synthesize carbamoyl phosphate. Tetramer of heterodimers (alpha,beta)4.

It catalyses the reaction hydrogencarbonate + L-glutamine + 2 ATP + H2O = carbamoyl phosphate + L-glutamate + 2 ADP + phosphate + 2 H(+). It carries out the reaction L-glutamine + H2O = L-glutamate + NH4(+). Its pathway is amino-acid biosynthesis; L-arginine biosynthesis; carbamoyl phosphate from bicarbonate: step 1/1. It participates in pyrimidine metabolism; UMP biosynthesis via de novo pathway; (S)-dihydroorotate from bicarbonate: step 1/3. In terms of biological role, small subunit of the glutamine-dependent carbamoyl phosphate synthetase (CPSase). CPSase catalyzes the formation of carbamoyl phosphate from the ammonia moiety of glutamine, carbonate, and phosphate donated by ATP, constituting the first step of 2 biosynthetic pathways, one leading to arginine and/or urea and the other to pyrimidine nucleotides. The small subunit (glutamine amidotransferase) binds and cleaves glutamine to supply the large subunit with the substrate ammonia. This chain is Carbamoyl phosphate synthase small chain, found in Caldanaerobacter subterraneus subsp. tengcongensis (strain DSM 15242 / JCM 11007 / NBRC 100824 / MB4) (Thermoanaerobacter tengcongensis).